The following is a 710-amino-acid chain: Mitochondrial intermediate peptidase (710 aa).

The N-terminal 33 residues, Met-1 to Ser-33, are a transit peptide targeting the mitochondrion. Position 124 is an N6-acetyllysine (Lys-124). His-492 lines the Zn(2+) pocket. Glu-493 is an active-site residue. Residues His-496 and His-499 each contribute to the Zn(2+) site.

This sequence belongs to the peptidase M3 family. In terms of assembly, monomer. Zn(2+) serves as cofactor.

It localises to the mitochondrion matrix. The catalysed reaction is Release of an N-terminal octapeptide as second stage of processing of some proteins imported into the mitochondrion.. Activity is divalent cation-dependent. It is stimulated by manganese, magnesium or calcium ions and reversibly inhibited by zinc, cobalt and iron. In terms of biological role, cleaves proteins, imported into the mitochondrion, to their mature size. This chain is Mitochondrial intermediate peptidase (Mipep), found in Rattus norvegicus (Rat).